The chain runs to 447 residues: Cytochrome P450 BJ-4 (447 aa).

Residue Cys-392 participates in heme binding.

Belongs to the cytochrome P450 family. Heme is required as a cofactor.

Cytochromes P450 are a group of heme-thiolate monooxygenases. They oxidize a variety of structurally unrelated compounds, including steroids, fatty acids, and xenobiotics. In Bradyrhizobium diazoefficiens (strain JCM 10833 / BCRC 13528 / IAM 13628 / NBRC 14792 / USDA 110), this protein is Cytochrome P450 BJ-4 (cyp117).